The primary structure comprises 1091 residues: Sodium/potassium exporting P-type ATPase 2 (1091 aa).

Residues 1–63 lie on the Cytoplasmic side of the membrane; that stretch reads MSEGTVKENN…LGDDTKIDYK (63 aa). Residues 64-84 form a helical membrane-spanning segment; it reads AMVLHQVCNAMIMVLVISMAI. Over 85-90 the chain is Extracellular; it reads SFAVRD. A helical transmembrane segment spans residues 91–111; that stretch reads WITGGVISFVIAVNVLIGLVQ. The Cytoplasmic segment spans residues 112-282; it reads EYKATKTMNS…TNVGTPLHRK (171 aa). A helical membrane pass occupies residues 283 to 303; it reads LSKLAVLLFWIAVLFAIIVMA. At 304–312 the chain is on the extracellular side; it reads SQKFDVDKR. A helical transmembrane segment spans residues 313 to 333; that stretch reads VAIYAICVALSMIPSSLVVVL. The Cytoplasmic segment spans residues 334–815; the sequence is TITMSVGAAV…RRMTDNIQKF (482 aa). Catalysis depends on Asp369, which acts as the 4-aspartylphosphate intermediate. The Mg(2+) site is built by Asp369 and Thr371. Residues Thr371 and Glu483 each contribute to the ATP site. The tract at residues 499-525 is disordered; the sequence is ALTGEKSTNQSNENDQSSLSQHNEKPG. The span at 503–519 shows a compositional bias: polar residues; that stretch reads EKSTNQSNENDQSSLSQ. ATP contacts are provided by Lys561, Arg606, Thr673, Gly674, Asp675, Arg732, and Lys738. A Mg(2+)-binding site is contributed by Asp757. Residue Asn760 coordinates ATP. The chain crosses the membrane as a helical span at residues 816–836; the sequence is VLQLLAENVAQALYLIIGLVF. The Extracellular segment spans residues 837–848; the sequence is RDENGKSVFPLS. A helical transmembrane segment spans residues 849–869; it reads PVEVLWIIVVTSCFPAMGLGL. Over 870–885 the chain is Cytoplasmic; that stretch reads EKAAPDLMDRPPHDSE. Residues 886 to 906 form a helical membrane-spanning segment; sequence VGIFTWEVIIDTFAYGIIMTG. Residues 907–943 lie on the Extracellular side of the membrane; the sequence is SCMASFTGSLYGINSGRLGHDCDGTYNSSCRDVYRSR. A helical membrane pass occupies residues 944 to 964; that stretch reads SAAFATMTWCALILAWEVVDM. The Cytoplasmic portion of the chain corresponds to 965 to 991; the sequence is RRSFFRMHPDTDSPVKEFFRSIWGNQF. A helical membrane pass occupies residues 992–1012; sequence LFWSIIFGFVSAFPVVYIPVI. The Extracellular segment spans residues 1013–1021; sequence NDKVFLHKP. A helical membrane pass occupies residues 1022–1042; sequence IGAEWGLAIAFTIAFWIGAEL. Residues 1043-1091 are Cytoplasmic-facing; that stretch reads YKCGKRRYFKTQRAHNPENDLESNNKRDPFEAYSTSTTIHTEVNIGIKQ.

It belongs to the cation transport ATPase (P-type) (TC 3.A.3) family. Type IID subfamily. Mg(2+) serves as cofactor. Post-translationally, the active site is phosphorylated in presence of sodium or potassium and in conditions of higher pH. Not phosphorylated in presence of calcium ions.

Its subcellular location is the cell membrane. The enzyme catalyses Na(+)(in) + ATP + H2O = Na(+)(out) + ADP + phosphate + H(+). The catalysed reaction is K(+)(in) + ATP + H2O = K(+)(out) + ADP + phosphate + H(+). Catalyzes the hydrolysis of ATP coupled with the export of sodium and potassium from the cell. May export potassium less efficiently. May transport other cations such as lithium. Sodium/potassium efflux ATPases are involved in salt tolerance and maintaining the membrane potential across the plasma membrane in high salinity (Na+) or alkaline (K+) environments. This Saccharomyces cerevisiae (strain ATCC 204508 / S288c) (Baker's yeast) protein is Sodium/potassium exporting P-type ATPase 2.